The sequence spans 424 residues: Inhibin beta A chain (424 aa).

A signal peptide spans 1–20 (MPLLWLRGFLLASCWIIVRS). Positions 21-308 (SPTPGSGGHS…EEHPHRRRRR (288 aa)) are excised as a propeptide. Residue Asn-165 is glycosylated (N-linked (GlcNAc...) asparagine). Disordered stretches follow at residues 178–197 (QQRRPQGSADAGEEAEDVGF) and 259–306 (KKKK…HRRR). Residues 188–197 (AGEEAEDVGF) show a composition bias toward acidic residues. Basic and acidic residues predominate over residues 263–275 (KEEEAEGRKRDGE). 4 disulfides stabilise this stretch: Cys-312/Cys-320, Cys-319/Cys-389, Cys-348/Cys-421, and Cys-352/Cys-423.

This sequence belongs to the TGF-beta family. Dimeric, linked by one or more disulfide bonds. Inhibin A is a dimer of alpha/INHA and beta-A/INHBA. Activin A is a homodimer of beta-A/INHBA. Activin AB is a dimer of beta-A/INHBA and beta-B/INHBB. Interacts with FST and FSTL3; these interactions prevent activin A interaction to its type II receptor. Activin A interacts with ACVR2A. Activin A interacts with BMPR2. Inhibin A interacts with ACVR1; this interaction creates a non-signaling complex (NSC) that inhibits ACVR1-mediated BMP signaling. Inhibin A interacts with ACVR2A.

It localises to the secreted. Its function is as follows. Inhibins/activins are involved in regulating a number of diverse functions such as hypothalamic and pituitary hormone secretion, gonadal hormone secretion, germ cell development and maturation, erythroid differentiation, insulin secretion, nerve cell survival, embryonic axial development or bone growth, depending on their subunit composition. In terms of biological role, activin A is a homodimer of INHBA that plays a role in several essential biological processes including embryonic development, stem cell maintenance and differentiation, haematopoiesis, cell proliferation and tissue fibrosis. Signals through type I (such as ACVR1B or ACVR1C) and type II receptors (such as ACVR2A, ACVR2B or BMPR2) which, upon ligand binding, phosphorylate SMAD2 and SMAD3 intracellular signaling mediators that form a complex with SMAD4, translocate to the nucleus and modulate gene expression. Can also activate alternative non-canonical intracellular signaling pathways including the p38 MAPK, extracellular signal-regulated kinases 1/2 (ERK1/2) and c-Jun N-terminal kinases (JNKs) to modulate cell migration and differentiation. Alternatively, promotes osteoblastic differentiation via ACVRL1-SMAD1/5/9 pathway. In addition, can engage the type I receptor ACVR1 to form an ACVR1-activin A-type II receptor non-signaling complex (NSC) that renders receptors unavailable for engagement with BMPs, hence resulting in an apparent inhibition of ACVR1-mediated BMP signaling. Functionally, inhibin A is a dimer of alpha/INHA and beta-A/INHBA that functions as a feedback regulator in the hypothalamic-pituitary-gonadal (HPG) axis. Inhibits the secretion of FSH from the anterior pituitary gland by acting on pituitary gonadotrope cells. Antagonizes activin A by binding to the proteoglycan, betaglycan, and forming a stable complex with and, thereby, sequestering type II activin receptors while excluding type I receptor. The protein is Inhibin beta A chain (INHBA) of Sus scrofa (Pig).